A 232-amino-acid polypeptide reads, in one-letter code: Phosphatidylserine decarboxylase proenzyme (232 aa).

Residue Ser190 is the Schiff-base intermediate with substrate; via pyruvic acid of the active site. Ser190 is modified (pyruvic acid (Ser); by autocatalysis).

It belongs to the phosphatidylserine decarboxylase family. PSD-A subfamily. Heterodimer of a large membrane-associated beta subunit and a small pyruvoyl-containing alpha subunit. The cofactor is pyruvate. Is synthesized initially as an inactive proenzyme. Formation of the active enzyme involves a self-maturation process in which the active site pyruvoyl group is generated from an internal serine residue via an autocatalytic post-translational modification. Two non-identical subunits are generated from the proenzyme in this reaction, and the pyruvate is formed at the N-terminus of the alpha chain, which is derived from the carboxyl end of the proenzyme. The post-translation cleavage follows an unusual pathway, termed non-hydrolytic serinolysis, in which the side chain hydroxyl group of the serine supplies its oxygen atom to form the C-terminus of the beta chain, while the remainder of the serine residue undergoes an oxidative deamination to produce ammonia and the pyruvoyl prosthetic group on the alpha chain.

Its subcellular location is the cell membrane. It catalyses the reaction a 1,2-diacyl-sn-glycero-3-phospho-L-serine + H(+) = a 1,2-diacyl-sn-glycero-3-phosphoethanolamine + CO2. It functions in the pathway phospholipid metabolism; phosphatidylethanolamine biosynthesis; phosphatidylethanolamine from CDP-diacylglycerol: step 2/2. In terms of biological role, catalyzes the formation of phosphatidylethanolamine (PtdEtn) from phosphatidylserine (PtdSer). In Cereibacter sphaeroides (strain ATCC 17025 / ATH 2.4.3) (Rhodobacter sphaeroides), this protein is Phosphatidylserine decarboxylase proenzyme.